Here is a 510-residue protein sequence, read N- to C-terminus: Lysine--tRNA ligase (510 aa).

Mg(2+) is bound by residues Glu420 and Glu427.

Belongs to the class-II aminoacyl-tRNA synthetase family. Homodimer. Requires Mg(2+) as cofactor.

It is found in the cytoplasm. It carries out the reaction tRNA(Lys) + L-lysine + ATP = L-lysyl-tRNA(Lys) + AMP + diphosphate. The sequence is that of Lysine--tRNA ligase from Ralstonia nicotianae (strain ATCC BAA-1114 / GMI1000) (Ralstonia solanacearum).